The chain runs to 1793 residues: Transposon Ty1-H Gag-Pol polyprotein (1793 aa).

3 stretches are compositionally biased toward polar residues: residues 1 to 10 (MESQQLSNYP), 48 to 60 (TKANSQQTTTPAS), and 127 to 152 (QSQFPQYPSSVGTPLSTPSPESGNTF). Disordered regions lie at residues 1–84 (MESQ…QNGP), 126–174 (PQSQ…PPPM), and 390–459 (GSRN…SKST). Low complexity predominate over residues 153-165 (TDSSSADSDMTST). An RNA-binding region spans residues 337–439 (NNGIHINNKV…NSKSKTARAH (103 aa)). Low complexity predominate over residues 440 to 456 (NVSTSNNSPSTDNDSIS). The active-site For protease activity; shared with dimeric partner is the Asp499. The interval 621–678 (NVHTSESTRKYPYPFIHRMLAHANAQTIRYSLKNNTITYFNESDVDWSSAIDYQCPDC) is integrase-type zinc finger-like. One can recognise an Integrase catalytic domain in the interval 698–873 (NSYEPFQYLH…AGLDISTLLP (176 aa)). Mg(2+) is bound by residues Asp709 and Asp774. Residues 996 to 1208 (AVSPTDSTPP…SSLGGIGDSN (213 aa)) form a disordered region. Residues 998–1007 (SPTDSTPPST) show a composition bias toward low complexity. Residues 1043–1053 (STPQISDIEST) show a composition bias toward polar residues. Residues 1076-1091 (ESSHASKSKDFRHSDS) are compositionally biased toward basic and acidic residues. Polar residues-rich tracts occupy residues 1092 to 1120 (YSDNETNHTNVPISSTGGTNNKTVPQTSE) and 1133 to 1144 (SIDTSSSESNSL). The short motif at 1216–1250 (KKRSLEDNETEIKVSRDTWNTKNMRSLEPPRSKKR) is the Bipartite nuclear localization signal element. Residues 1376 to 1514 (NNYYITQLDI…DILGLEIKYQ (139 aa)) form the Reverse transcriptase Ty1/copia-type domain. Mg(2+) is bound by residues Asp1384, Asp1465, Asp1466, Asp1648, Glu1690, and Asp1723. The RNase H Ty1/copia-type domain maps to 1648 to 1790 (DASYGNQPYY…IKTFKLLTNK (143 aa)).

As to quaternary structure, the capsid protein forms a homotrimer, from which the VLPs are assembled. The protease is a homodimer, whose active site consists of two apposed aspartic acid residues. Initially, virus-like particles (VLPs) are composed of the structural unprocessed proteins Gag and Gag-Pol, and also contain the host initiator methionine tRNA (tRNA(i)-Met) which serves as a primer for minus-strand DNA synthesis, and a dimer of genomic Ty RNA. Processing of the polyproteins occurs within the particle and proceeds by an ordered pathway, called maturation. First, the protease (PR) is released by autocatalytic cleavage of the Gag-Pol polyprotein yielding capsid protein p45 and a Pol-p154 precursor protein. This cleavage is a prerequisite for subsequent processing of Pol-p154 at the remaining sites to release the mature structural and catalytic proteins. Maturation takes place prior to the RT reaction and is required to produce transposition-competent VLPs.

The protein resides in the cytoplasm. The protein localises to the nucleus. It carries out the reaction DNA(n) + a 2'-deoxyribonucleoside 5'-triphosphate = DNA(n+1) + diphosphate. The catalysed reaction is Endonucleolytic cleavage to 5'-phosphomonoester.. Capsid protein (CA) is the structural component of the virus-like particle (VLP), forming the shell that encapsulates the retrotransposons dimeric RNA genome. The particles are assembled from trimer-clustered units and there are holes in the capsid shells that allow for the diffusion of macromolecules. CA also has nucleocapsid-like chaperone activity, promoting primer tRNA(i)-Met annealing to the multipartite primer-binding site (PBS), dimerization of Ty1 RNA and initiation of reverse transcription. Functionally, the aspartyl protease (PR) mediates the proteolytic cleavages of the Gag and Gag-Pol polyproteins after assembly of the VLP. In terms of biological role, reverse transcriptase/ribonuclease H (RT) is a multifunctional enzyme that catalyzes the conversion of the retro-elements RNA genome into dsDNA within the VLP. The enzyme displays a DNA polymerase activity that can copy either DNA or RNA templates, and a ribonuclease H (RNase H) activity that cleaves the RNA strand of RNA-DNA heteroduplexes during plus-strand synthesis and hydrolyzes RNA primers. The conversion leads to a linear dsDNA copy of the retrotransposon that includes long terminal repeats (LTRs) at both ends. Its function is as follows. Integrase (IN) targets the VLP to the nucleus, where a subparticle preintegration complex (PIC) containing at least integrase and the newly synthesized dsDNA copy of the retrotransposon must transit the nuclear membrane. Once in the nucleus, integrase performs the integration of the dsDNA into the host genome. The protein is Transposon Ty1-H Gag-Pol polyprotein (TY1B-H) of Saccharomyces cerevisiae (strain ATCC 204508 / S288c) (Baker's yeast).